Reading from the N-terminus, the 476-residue chain is Cysteine--tRNA ligase (476 aa).

A Zn(2+)-binding site is contributed by Cys36. The 'HIGH' region signature appears at 38-48; it reads PTVYDYAHIGN. Residues Cys221, His246, and Glu250 each coordinate Zn(2+). A 'KMSKS' region motif is present at residues 278–282; it reads KMSKS. Lys281 contributes to the ATP binding site.

Belongs to the class-I aminoacyl-tRNA synthetase family. Monomer. The cofactor is Zn(2+).

Its subcellular location is the cytoplasm. The catalysed reaction is tRNA(Cys) + L-cysteine + ATP = L-cysteinyl-tRNA(Cys) + AMP + diphosphate. The sequence is that of Cysteine--tRNA ligase from Chlamydia abortus (strain DSM 27085 / S26/3) (Chlamydophila abortus).